A 772-amino-acid chain; its full sequence is Protocadherin beta-6 (772 aa).

The first 28 residues, 1 to 28 (METTLAKTPEKRQVVFLAILLLLWEAGS), serve as a signal peptide directing secretion. Cadherin domains are found at residues 31–133 (IRYS…SPEF), 134–242 (PDTE…APEF), 243–346 (VQSL…APKL), 347–450 (TISS…APAF), and 451–560 (TQTS…APFI). Residues 31–690 (IRYSIPEETE…QDEDMLTLYL (660 aa)) lie on the Extracellular side of the membrane. Cysteines 96 and 102 form a disulfide. N-linked (GlcNAc...) asparagine glycosylation is present at N169. A glycan (O-linked (Man) serine) is linked at S223. O-linked (Man) threonine glycosylation occurs at T225. An N-linked (GlcNAc...) asparagine glycan is attached at N417. N-linked (GlcNAc...) asparagine glycosylation occurs at N566. A Cadherin 6 domain is found at 575-675 (LPRAAEPGYL…SQPYLPLPEV (101 aa)). A helical transmembrane segment spans residues 691-711 (VIALASVSSLFLLSVLLFVGV). Over 712 to 772 (RLCRRVREAS…DFKFLNHYSQ (61 aa)) the chain is Cytoplasmic.

In terms of assembly, forms homodimers in trans (molecules expressed by two different cells). Forms promiscuous heterodimers in cis (at the plasma membrane of the same cell) with other protocadherins.

Its subcellular location is the cell membrane. Its function is as follows. Calcium-dependent cell-adhesion protein involved in cells self-recognition and non-self discrimination. Thereby, it is involved in the establishment and maintenance of specific neuronal connections in the brain. In Mus musculus (Mouse), this protein is Protocadherin beta-6.